Here is a 208-residue protein sequence, read N- to C-terminus: Large ribosomal subunit protein uL3 (208 aa).

N5-methylglutamine is present on Gln150.

It belongs to the universal ribosomal protein uL3 family. Part of the 50S ribosomal subunit. Forms a cluster with proteins L14 and L19. In terms of processing, methylated by PrmB.

In terms of biological role, one of the primary rRNA binding proteins, it binds directly near the 3'-end of the 23S rRNA, where it nucleates assembly of the 50S subunit. The chain is Large ribosomal subunit protein uL3 from Buchnera aphidicola subsp. Cinara cedri (strain Cc).